The chain runs to 507 residues: MALRRTSDSKVYLPPTPVSRVVRRMNMYTHRIYYYAGSSRLLTLGHPYFPIPKSGSTAEIPKVSAYQYRVFRVHLPDPNKFGLPDPQLYNPETERLVWACVGVEVGRGQPLGVGLSGHPLFNKLDDTENSHLATANADTDNRDNVCVDNKQTQLCIIGCTPPLGEHWGVGTVCKNAQSQVQRGDCPPLELISSVIEDGDMIDTGFGAMDFTALQATKCDVPLDINQSICKYPDYLKMSADTYGNSMFFFLRREQLFARHFFNKAGTIGDSVPVSMYIKGAGQGREPPTTSIYSRTPSGSMVTSDAQLFNKPYWLQRAQGHNNGICWGNQLFVTCVDTTRSTNLTISTVSAQSASATFKPSDYKQFIRHGEEYELQFIFQLCKITLTTDVMAYIHTMNSTILENWNFGLTLPPTASLEDAYRFIKNSATTCQRDAPAQPKEDPFSKLKFWDVDLKEKFSIDLDQFPLGRKFMLQAGIQRRPKLGTKRPASSLSASSSSTTRKKRKLTK.

The disordered stretch occupies residues 477–507 (QRRPKLGTKRPASSLSASSSSTTRKKRKLTK). The span at 488–498 (ASSLSASSSST) shows a compositional bias: low complexity.

It belongs to the papillomaviridae L1 protein family. In terms of assembly, self-assembles into homopentamers. The capsid has an icosahedral symmetry and consists of 72 capsomers, with each capsomer being a pentamer of L1. Interacts with the minor capsid protein L2; this interaction is necessary for viral genome encapsidation. Interacts with protein E2; this interaction enhances E2-dependent replication and transcription activation.

It is found in the virion. The protein localises to the host nucleus. In terms of biological role, forms an icosahedral capsid with a T=7 symmetry and a 50 nm diameter. The capsid is composed of 72 pentamers linked to each other by disulfide bonds and associated with L2 proteins. Binds to heparan sulfate proteoglycans on cell surface of basal layer keratinocytes to provide initial virion attachment. This binding mediates a conformational change in the virus capsid that facilitates efficient infection. The virion enters the host cell via endocytosis. During virus trafficking, L1 protein dissociates from the viral DNA and the genomic DNA is released to the host nucleus. The virion assembly takes place within the cell nucleus. Encapsulates the genomic DNA together with protein L2. The chain is Major capsid protein L1 from Homo sapiens (Human).